The following is a 361-amino-acid chain: dTDP-glucose 4,6-dehydratase (361 aa).

NAD(+) is bound by residues Phe11–Ile12, Asp32–Thr35, Asp58–Ile59, Leu80–Ser84, and Thr99. Substrate is bound at residue Ser84. Thr133 contacts substrate. Asp134 (proton donor) is an active-site residue. Residues Glu135 and Tyr167 each act as proton acceptor in the active site. Tyr167–Lys171 provides a ligand contact to NAD(+). Asn196 serves as a coordination point for substrate. Asn197 is an NAD(+) binding site. Substrate contacts are provided by residues Lys206–Leu207, Pro222–Tyr224, Arg231, Asn266, Asp296–His300, and Tyr357.

It belongs to the NAD(P)-dependent epimerase/dehydratase family. dTDP-glucose dehydratase subfamily. In terms of assembly, homodimer. The cofactor is NAD(+).

It catalyses the reaction dTDP-alpha-D-glucose = dTDP-4-dehydro-6-deoxy-alpha-D-glucose + H2O. It functions in the pathway carbohydrate biosynthesis; dTDP-L-rhamnose biosynthesis. It participates in bacterial outer membrane biogenesis; LPS O-antigen biosynthesis. Its function is as follows. Catalyzes the dehydration of dTDP-D-glucose to form dTDP-6-deoxy-D-xylo-4-hexulose via a three-step process involving oxidation, dehydration and reduction. The protein is dTDP-glucose 4,6-dehydratase of Salmonella typhimurium (strain LT2 / SGSC1412 / ATCC 700720).